Here is a 468-residue protein sequence, read N- to C-terminus: Chromosomal replication initiator protein DnaA (468 aa).

A domain I, interacts with DnaA modulators region spans residues 1 to 84 (MSSSLWLQCL…RFEVGSRRVA (84 aa)). The segment at 84–131 (AAPKPAPTRTPADVAAESSAPAQLQARKPVHKTWDDDAQVIADINHRS) is domain II. The segment covering 85 to 95 (APKPAPTRTPA) has biased composition (low complexity). The disordered stretch occupies residues 85 to 104 (APKPAPTRTPADVAAESSAP). The segment at 132 to 348 (NVNPKHKFNN…GALNRVIANA (217 aa)) is domain III, AAA+ region. 4 residues coordinate ATP: G176, G178, K179, and T180. Residues 349 to 468 (NFTGRPITID…YSNLIRTLSS (120 aa)) form a domain IV, binds dsDNA region.

The protein belongs to the DnaA family. In terms of assembly, oligomerizes as a right-handed, spiral filament on DNA at oriC.

Its subcellular location is the cytoplasm. Plays an essential role in the initiation and regulation of chromosomal replication. ATP-DnaA binds to the origin of replication (oriC) to initiate formation of the DNA replication initiation complex once per cell cycle. Binds the DnaA box (a 9 base pair repeat at the origin) and separates the double-stranded (ds)DNA. Forms a right-handed helical filament on oriC DNA; dsDNA binds to the exterior of the filament while single-stranded (ss)DNA is stabiized in the filament's interior. The ATP-DnaA-oriC complex binds and stabilizes one strand of the AT-rich DNA unwinding element (DUE), permitting loading of DNA polymerase. After initiation quickly degrades to an ADP-DnaA complex that is not apt for DNA replication. Binds acidic phospholipids. Functionally, complements a temperature-sensitive E.coli mutant, the DnaA consensus is 5'-TT(A/T)TNCACA-3'. The polypeptide is Chromosomal replication initiator protein DnaA (Vibrio harveyi (Beneckea harveyi)).